Here is an 898-residue protein sequence, read N- to C-terminus: MQPTDPTKFTEQAWDAIVKSQEVARRYKNTNLEVEHILLALLEQDMGLAARIFQRAAVDGEGLRQQLEIFTNRQPKQAYVEQLYLGRSLDVMLDRADAARSSWEDKFISVEHLLVGFAEDDRVGRKTLRAFNLDPQDLELAIKAIRGSQKVTEPNQEEKYEALDKYGRDLTEQARQGKLDPVIGRDEEIRRVIQVLSRRSKNNPVLIGEPGVGKTAIAEGLAQRIINGDVPESLKNRQLISLDMGSLIAGAKYRGEFEERLRSVMKEVTNSDGQIILFIDEVHTVVGAGGREGSGSMDAGNLLKPMLARGELRCIGATTLDEYRKNIEKDPALERRFQQVYVKQPSVDDTISILRGLKEKYEVHHGVKITDSALVAAATLSHRYIQDRFLPDKAIDLVDEAAARLKMEITSKPVELEDIDRRLMQLQMEKLSLEGEEKRPGLGADKSSKERLEKIQQEITELEGQQQELSGQWLSEKQMLEEINTLKEKEQELRLQVEKAERATDWEKAAKIKYGELEVLQHDIEEKESKLLEIQGSGNTLLREQVTESDIAEIVAGWTGIPMNRLMETERQKLLQLEGHLHQRVIGQKEAVAAVSAAIRRARAGMKDPSRPIGSFLFMGPTGVGKTELARALAGFLFDSEEAMVRIDMSEYMEKHAVSRLIGAPPGYVGYEEGGQLSEAVRRRPYSVVLLDEVEKAHLDVFNILLQVLDDGRITDSQGRVVDFRNTIIVMTSNIGSDHILSLSADDADYDKMQKQVLQSLRKHFRPEFLNRIDDLIIFHTLKRDELRRIVVLQIKRIEKLLDEQKITLSLSDAALDHIVSAGYDPTYGARPLKRAIQRQLENPIATKILENTFVAGDKILIDCVDGQLIFDKEIEPTTLPEEPEENITAVEVEVLSS.

A Clp R domain is found at 6–148 (PTKFTEQAWD…ELAIKAIRGS (143 aa)). 2 repeat regions span residues 9-74 (FTEQ…TNRQ) and 85-148 (LGRS…IRGS). Positions 161 to 344 (EALDKYGRDL…RRFQQVYVKQ (184 aa)) are NBD1. ATP is bound at residue 208–215 (GEPGVGKT). The segment at 345–560 (PSVDDTISIL…IAEIVAGWTG (216 aa)) is linker. The stretch at 395 to 536 (IDLVDEAAAR…KESKLLEIQG (142 aa)) forms a coiled coil. The interval 570–781 (ERQKLLQLEG…RIDDLIIFHT (212 aa)) is NBD2. 620–627 (GPTGVGKT) is a binding site for ATP. Residues 782–898 (LKRDELRRIV…TAVEVEVLSS (117 aa)) are C-terminal.

Belongs to the ClpA/ClpB family. Homohexamer. The oligomerization is ATP-dependent.

The protein localises to the cytoplasm. Functionally, part of a stress-induced multi-chaperone system, it is involved in the recovery of the cell from heat-induced damage, in cooperation with DnaK, DnaJ and GrpE. Acts before DnaK, in the processing of protein aggregates. Protein binding stimulates the ATPase activity; ATP hydrolysis unfolds the denatured protein aggregates, which probably helps expose new hydrophobic binding sites on the surface of ClpB-bound aggregates, contributing to the solubilization and refolding of denatured protein aggregates by DnaK. This Synechocystis sp. (strain ATCC 27184 / PCC 6803 / Kazusa) protein is Chaperone protein ClpB 1 (clpB1).